The chain runs to 275 residues: Beta-lactamase OXA-3 (275 aa).

Residues 1–21 (MAIRIFAILFSTFVFGTFAHA) form the signal peptide. The Acyl-ester intermediate role is filled by Ser-72. At Lys-75 the chain carries N6-carboxylysine. A substrate-binding site is contributed by 210-212 (KTG).

The protein belongs to the class-D beta-lactamase family.

The catalysed reaction is a beta-lactam + H2O = a substituted beta-amino acid. This is an oxacillin-hydrolyzing beta-lactamase. This Pseudomonas aeruginosa protein is Beta-lactamase OXA-3 (bla).